The sequence spans 487 residues: MSDHAINEHPSRILNTIEKIRFWKNGLAEELELLFRKQCEDTFTLQAINIEVDTQDENKIEEVRIYLSTPAFDKTILTSACITVRSYYPSQPPIVQLLDEKGGKHKYTSLLLQLWKNERSVFNIYRLVQALIKQDFEREHTSPPELPTKLVNTIEKLKVKEENEAPPVIPAKPFSSSSEQHFRKVPALPSKLPPKPLKITANSSLGQETNSNSSSFQSTLFSLNTAPFSATSQQLVHDSVSLRRPSSNIPAQKPIPPKPEQNEIIITKDTPSLKDKYSKPALLPQKPKVSKGQIVQQVSVFSTGKKIESQSLLNLIDTDIETPLKGSSELLYSEDFKPNVDPVKIQQILHKQNKIIEEKWISQIRISKNLEVKQRLLDQERHALETLAKNIENNRFILGKRRRKAREALQKLDNLKDLSVQELFIIPSERELKYYELKRKDEKLDEGIRALNQALHHESIMPASWLKGIKLLARQQFLIRDEMLQYS.

Residues 428–487 (SERELKYYELKRKDEKLDEGIRALNQALHHESIMPASWLKGIKLLARQQFLIRDEMLQYS) form the SB domain.

In terms of assembly, component of the ESCRT-I complex (endosomal sorting complex required for transport I).

The protein localises to the cytoplasm. It is found in the endosome. The protein resides in the late endosome membrane. Component of the ESCRT-I complex, a regulator of vesicular trafficking process. Binds to ubiquitinated cargo proteins and is required for the sorting of endocytic ubiquitinated cargos into multivesicular bodies (MVBs). Mediates the association to the ESCRT-0 complex. The chain is ESCRT-I complex subunit vps23 (sst6) from Schizosaccharomyces pombe (strain 972 / ATCC 24843) (Fission yeast).